Here is a 126-residue protein sequence, read N- to C-terminus: Large ribosomal subunit protein bL12c (126 aa).

The protein belongs to the bacterial ribosomal protein bL12 family. In terms of assembly, homodimer. Part of the ribosomal stalk of the 50S ribosomal subunit. Forms a multimeric L10(L12)X complex, where L10 forms an elongated spine to which 2 to 4 L12 dimers bind in a sequential fashion. Binds GTP-bound translation factors.

The protein localises to the plastid. It localises to the cyanelle. Its function is as follows. Forms part of the ribosomal stalk which helps the ribosome interact with GTP-bound translation factors. Is thus essential for accurate translation. The protein is Large ribosomal subunit protein bL12c of Cyanophora paradoxa.